Consider the following 153-residue polypeptide: uncharacterized protein (153 aa).

Transmembrane regions (helical) follow at residues 1–21 (MAAT…LFFS) and 106–126 (IVPI…TVYI).

The protein localises to the membrane. This is an uncharacterized protein from Saccharomyces cerevisiae (strain ATCC 204508 / S288c) (Baker's yeast).